The sequence spans 326 residues: ATP-dependent 6-phosphofructokinase (326 aa).

Position 12 (G12) interacts with ATP. Residue 22-26 (RAIIK) participates in ADP binding. ATP is bound by residues 73 to 74 (RF) and 103 to 106 (GDGS). D104 contributes to the Mg(2+) binding site. 126–128 (TID) is a binding site for substrate. Catalysis depends on D128, which acts as the Proton acceptor. Residue R155 participates in ADP binding. Residues R163 and 170–172 (MGH) contribute to the substrate site. Residues 186-188 (GSE), K212, and 215-217 (KRS) contribute to the ADP site. Substrate-binding positions include E224, K246, and 252-255 (HIQR).

It belongs to the phosphofructokinase type A (PFKA) family. ATP-dependent PFK group I subfamily. Prokaryotic clade 'B1' sub-subfamily. In terms of assembly, homotetramer. It depends on Mg(2+) as a cofactor.

It is found in the cytoplasm. It carries out the reaction beta-D-fructose 6-phosphate + ATP = beta-D-fructose 1,6-bisphosphate + ADP + H(+). The protein operates within carbohydrate degradation; glycolysis; D-glyceraldehyde 3-phosphate and glycerone phosphate from D-glucose: step 3/4. Allosterically activated by ADP and other diphosphonucleosides, and allosterically inhibited by phosphoenolpyruvate. Functionally, catalyzes the phosphorylation of D-fructose 6-phosphate to fructose 1,6-bisphosphate by ATP, the first committing step of glycolysis. This Mycoplasmopsis pulmonis (strain UAB CTIP) (Mycoplasma pulmonis) protein is ATP-dependent 6-phosphofructokinase.